The sequence spans 805 residues: Nitrite reductase [NAD(P)H] (805 aa).

43-79 is an FAD binding site; it reads YNRILLSKVLQGDTDIKDITLNDWDWYEENNIQLYTN. 193–223 contacts NADP(+); the sequence is LQNELEKQGMTFLLEKQTEEIVGDDRVEGLR. 4 residues coordinate [2Fe-2S] cluster: C418, C420, C453, and C456. Positions 635, 641, 675, and 679 each coordinate [4Fe-4S] cluster. Residue C679 participates in siroheme binding.

This sequence belongs to the nitrite and sulfite reductase 4Fe-4S domain family. As to quaternary structure, homodimer. The cofactor is siroheme. [2Fe-2S] cluster is required as a cofactor. Requires [4Fe-4S] cluster as cofactor. FAD serves as cofactor.

The enzyme catalyses NH4(+) + 3 NADP(+) + 2 H2O = nitrite + 3 NADPH + 5 H(+). The catalysed reaction is NH4(+) + 3 NAD(+) + 2 H2O = nitrite + 3 NADH + 5 H(+). The protein operates within nitrogen metabolism; nitrate reduction (assimilation). Functionally, required for nitrite assimilation. The polypeptide is Nitrite reductase [NAD(P)H] (nasD) (Bacillus subtilis (strain 168)).